Here is a 122-residue protein sequence, read N- to C-terminus: uncharacterized protein (122 aa).

This is an uncharacterized protein from Mycoplasma pneumoniae (strain ATCC 29342 / M129 / Subtype 1) (Mycoplasmoides pneumoniae).